Here is a 340-residue protein sequence, read N- to C-terminus: 4-hydroxy-2-oxovalerate aldolase (340 aa).

The 253-residue stretch at 8–260 folds into the Pyruvate carboxyltransferase domain; sequence VILHDMSLRD…SHGINLYDIM (253 aa). 16–17 provides a ligand contact to substrate; that stretch reads RD. Position 17 (D17) interacts with Mn(2+). H20 (proton acceptor) is an active-site residue. S170 and H199 together coordinate substrate. Mn(2+) is bound by residues H199 and H201. Y290 is a substrate binding site.

Belongs to the 4-hydroxy-2-oxovalerate aldolase family.

The enzyme catalyses (S)-4-hydroxy-2-oxopentanoate = acetaldehyde + pyruvate. The chain is 4-hydroxy-2-oxovalerate aldolase from Shewanella pealeana (strain ATCC 700345 / ANG-SQ1).